The sequence spans 510 residues: ATP synthase subunit alpha (510 aa).

Position 171-178 (glycine 171–threonine 178) interacts with ATP.

This sequence belongs to the ATPase alpha/beta chains family. As to quaternary structure, F-type ATPases have 2 components, CF(1) - the catalytic core - and CF(0) - the membrane proton channel. CF(1) has five subunits: alpha(3), beta(3), gamma(1), delta(1), epsilon(1). CF(0) has three main subunits: a(1), b(2) and c(9-12). The alpha and beta chains form an alternating ring which encloses part of the gamma chain. CF(1) is attached to CF(0) by a central stalk formed by the gamma and epsilon chains, while a peripheral stalk is formed by the delta and b chains.

The protein localises to the cell inner membrane. The catalysed reaction is ATP + H2O + 4 H(+)(in) = ADP + phosphate + 5 H(+)(out). Functionally, produces ATP from ADP in the presence of a proton gradient across the membrane. The alpha chain is a regulatory subunit. The protein is ATP synthase subunit alpha of Phenylobacterium zucineum (strain HLK1).